A 559-amino-acid chain; its full sequence is Polypeptide N-acetylgalactosaminyltransferase 1 (559 aa).

The Cytoplasmic portion of the chain corresponds to M1–K8. A helical; Signal-anchor for type II membrane protein membrane pass occupies residues V9–F28. The Lumenal portion of the chain corresponds to S29–F559. Positions G45–V65 are disordered. The N-linked (GlcNAc...) asparagine glycan is linked to N95. 5 cysteine pairs are disulfide-bonded: C106–C339, C330–C408, C442–C459, C482–C497, and C523–C540. A catalytic subdomain A region spans residues L115–R225. Substrate contacts are provided by D156 and R186. Mn(2+)-binding residues include D209 and H211. Residues P285–R347 form a catalytic subdomain B region. A substrate-binding site is contributed by W316. Mn(2+) is bound at residue H344. Substrate-binding residues include R347 and Y352. The Ricin B-type lectin domain maps to F429–R551. N-linked (GlcNAc...) asparagine glycosylation is present at N552.

Belongs to the glycosyltransferase 2 family. GalNAc-T subfamily. It depends on Mn(2+) as a cofactor. In terms of tissue distribution, widely expressed. Expressed in all tissues tested.

Its subcellular location is the golgi apparatus. It is found in the golgi stack membrane. It localises to the secreted. The catalysed reaction is L-seryl-[protein] + UDP-N-acetyl-alpha-D-galactosamine = a 3-O-[N-acetyl-alpha-D-galactosaminyl]-L-seryl-[protein] + UDP + H(+). It catalyses the reaction L-threonyl-[protein] + UDP-N-acetyl-alpha-D-galactosamine = a 3-O-[N-acetyl-alpha-D-galactosaminyl]-L-threonyl-[protein] + UDP + H(+). The protein operates within protein modification; protein glycosylation. Catalyzes the initial reaction in O-linked oligosaccharide biosynthesis, the transfer of an N-acetyl-D-galactosamine residue to a serine or threonine residue on the protein receptor. Has a broad spectrum of substrates such as apomucin-, MUC5AC-, MUC1- and MUC2-derived peptides. The protein is Polypeptide N-acetylgalactosaminyltransferase 1 of Homo sapiens (Human).